A 513-amino-acid polypeptide reads, in one-letter code: Na(+)/H(+) antiporter NhaB (513 aa).

12 helical membrane-spanning segments follow: residues 21–41, 64–84, 88–108, 119–139, 143–163, 202–222, 243–263, 299–318, 322–344, 350–370, 389–409, and 477–497; these read ICII…SPFV, QPGG…AHHV, IMAN…IYFM, LLIV…SATF, FLDA…FYGV, LLMH…VGEP, LPVS…LEHF, MGIQ…LHLA, IIGL…HAIG, PMPF…IVDL, LALF…VFVG, and MALP…EFLL.

This sequence belongs to the NhaB Na(+)/H(+) (TC 2.A.34) antiporter family.

The protein resides in the cell inner membrane. It carries out the reaction 2 Na(+)(in) + 3 H(+)(out) = 2 Na(+)(out) + 3 H(+)(in). Functionally, na(+)/H(+) antiporter that extrudes sodium in exchange for external protons. The protein is Na(+)/H(+) antiporter NhaB of Actinobacillus pleuropneumoniae serotype 3 (strain JL03).